A 200-amino-acid polypeptide reads, in one-letter code: Lipopolysaccharide core heptose(II)-phosphate phosphatase (200 aa).

Residues 1-25 (MLAFCRSSLKSKKYFIILLALAAIA) form the signal peptide.

This sequence belongs to the phosphoglycerate mutase family. Ais subfamily.

Its subcellular location is the periplasm. It functions in the pathway bacterial outer membrane biogenesis; lipopolysaccharide metabolism. Its function is as follows. Catalyzes the dephosphorylation of heptose(II) of the outer membrane lipopolysaccharide core. This is Lipopolysaccharide core heptose(II)-phosphate phosphatase from Escherichia coli O17:K52:H18 (strain UMN026 / ExPEC).